Here is a 470-residue protein sequence, read N- to C-terminus: Suppressor of SWI4 1 homolog (470 aa).

Residues 29–292 form the Brix domain; the sequence is PHSFVFTRGR…LIKIQEGVGN (264 aa). Phosphoserine is present on residues Ser-238 and Ser-240. 2 disordered regions span residues 240–264 and 323–470; these read SEVE…GNMQ and AQRQ…RRRN. Over residues 342-355 the composition is skewed to basic residues; it reads AHKKKSLAGIKRAR. The residue at position 362 (Ser-362) is a Phosphoserine. The residue at position 441 (Lys-441) is an N6-acetyllysine. Residues 447–457 are compositionally biased toward basic residues; sequence QRGKAKPRPRA.

It is found in the nucleus. Its subcellular location is the nucleolus. Its function is as follows. May have a role in cell growth. The polypeptide is Suppressor of SWI4 1 homolog (Ppan) (Mus musculus (Mouse)).